The primary structure comprises 231 residues: Large ribosomal subunit protein uL1 (231 aa).

The protein belongs to the universal ribosomal protein uL1 family. In terms of assembly, part of the 50S ribosomal subunit.

Its function is as follows. Binds directly to 23S rRNA. The L1 stalk is quite mobile in the ribosome, and is involved in E site tRNA release. In terms of biological role, protein L1 is also a translational repressor protein, it controls the translation of the L11 operon by binding to its mRNA. The sequence is that of Large ribosomal subunit protein uL1 from Moorella thermoacetica (strain ATCC 39073 / JCM 9320).